The following is an 86-amino-acid chain: Large ribosomal subunit protein bL31 (86 aa).

Belongs to the bacterial ribosomal protein bL31 family. Type A subfamily. In terms of assembly, part of the 50S ribosomal subunit.

Its function is as follows. Binds the 23S rRNA. This Parasynechococcus marenigrum (strain WH8102) protein is Large ribosomal subunit protein bL31.